We begin with the raw amino-acid sequence, 119 residues long: Large ribosomal subunit protein P3 (119 aa).

A disordered region spans residues 81 to 119 (GAAAGAASGGAAAEAPKAEEKKEEEKEESEDDLGFSLFD). The segment covering 84–95 (AGAASGGAAAEA) has biased composition (low complexity).

The protein belongs to the eukaryotic ribosomal protein P1/P2 family. Phosphorylated.

Functionally, plays an important role in the elongation step of protein synthesis. The sequence is that of Large ribosomal subunit protein P3 from Oryza sativa subsp. japonica (Rice).